The primary structure comprises 340 residues: Probable dual-specificity RNA methyltransferase RlmN (340 aa).

Glutamate 93 acts as the Proton acceptor in catalysis. The 229-residue stretch at 99–327 (TAKRLTVCVS…VSVRYSRGLE (229 aa)) folds into the Radical SAM core domain. Cysteine 106 and cysteine 332 are joined by a disulfide. [4Fe-4S] cluster is bound by residues cysteine 113, cysteine 117, and cysteine 120. S-adenosyl-L-methionine contacts are provided by residues 160 to 161 (GE), serine 190, 213 to 215 (SLH), and asparagine 289. The S-methylcysteine intermediate role is filled by cysteine 332.

It belongs to the radical SAM superfamily. RlmN family. Requires [4Fe-4S] cluster as cofactor.

It localises to the cytoplasm. It carries out the reaction adenosine(2503) in 23S rRNA + 2 reduced [2Fe-2S]-[ferredoxin] + 2 S-adenosyl-L-methionine = 2-methyladenosine(2503) in 23S rRNA + 5'-deoxyadenosine + L-methionine + 2 oxidized [2Fe-2S]-[ferredoxin] + S-adenosyl-L-homocysteine. It catalyses the reaction adenosine(37) in tRNA + 2 reduced [2Fe-2S]-[ferredoxin] + 2 S-adenosyl-L-methionine = 2-methyladenosine(37) in tRNA + 5'-deoxyadenosine + L-methionine + 2 oxidized [2Fe-2S]-[ferredoxin] + S-adenosyl-L-homocysteine. Functionally, specifically methylates position 2 of adenine 2503 in 23S rRNA and position 2 of adenine 37 in tRNAs. The chain is Probable dual-specificity RNA methyltransferase RlmN from Rippkaea orientalis (strain PCC 8801 / RF-1) (Cyanothece sp. (strain PCC 8801)).